We begin with the raw amino-acid sequence, 505 residues long: Histidine ammonia-lyase (505 aa).

Positions 141–143 (ASG) form a cross-link, 5-imidazolinone (Ala-Gly). At S142 the chain carries 2,3-didehydroalanine (Ser).

This sequence belongs to the PAL/histidase family. Contains an active site 4-methylidene-imidazol-5-one (MIO), which is formed autocatalytically by cyclization and dehydration of residues Ala-Ser-Gly.

The protein localises to the cytoplasm. It carries out the reaction L-histidine = trans-urocanate + NH4(+). Its pathway is amino-acid degradation; L-histidine degradation into L-glutamate; N-formimidoyl-L-glutamate from L-histidine: step 1/3. This chain is Histidine ammonia-lyase, found in Bacillus thuringiensis (strain Al Hakam).